Reading from the N-terminus, the 605-residue chain is Ras guanine nucleotide exchange factor A (605 aa).

The 33-residue stretch at D67–T99 folds into the LisH domain. The N-terminal Ras-GEF domain occupies D198–S320. One can recognise a Ras-GEF domain in the interval D353–K597.

In terms of assembly, component of the Sca1 complex composed of at least gefA, gefH, scaA, phr, and the protein phosphatase 2A subunits pppA and pho2B. Interacts directly with gefH.

Its subcellular location is the cell membrane. In terms of biological role, ras-bound GDP/GTP exchange factor required for normal activation of adenylyl cyclase. Component of the Sca1 complex, a regulator of cell motility, chemotaxis and signal relay. The Sca1 complex is recruited to the plasma membrane in a chemoattractant- and F-actin-dependent manner and is enriched at the leading edge of chemotaxing cells where it regulates F-actin dynamics and signal relay by controlling the activation of rasC and the downstream target of rapamycin complex 2 (TORC2)-Akt/protein kinase B (PKB) pathway. This chain is Ras guanine nucleotide exchange factor A (gefA), found in Dictyostelium discoideum (Social amoeba).